A 949-amino-acid chain; its full sequence is UvrABC system protein A (949 aa).

42–49 (GLSGSGKS) serves as a coordination point for ATP. The C4-type zinc-finger motif lies at 262–289 (CPVCSYSLPELEPRLFSFNNPMGSCPTC). 2 ABC transporter domains span residues 319–596 (WDKR…ENSV) and 616–945 (VNPD…KYLK). 649–656 (GVSGSGKS) serves as a coordination point for ATP. The C4-type zinc-finger motif lies at 748-774 (CEACQGDGVIKVEMHFLPDVYVPCEVC).

The protein belongs to the ABC transporter superfamily. UvrA family. In terms of assembly, forms a heterotetramer with UvrB during the search for lesions.

The protein resides in the cytoplasm. In terms of biological role, the UvrABC repair system catalyzes the recognition and processing of DNA lesions. UvrA is an ATPase and a DNA-binding protein. A damage recognition complex composed of 2 UvrA and 2 UvrB subunits scans DNA for abnormalities. When the presence of a lesion has been verified by UvrB, the UvrA molecules dissociate. The sequence is that of UvrABC system protein A from Neisseria meningitidis serogroup B (strain ATCC BAA-335 / MC58).